Here is a 495-residue protein sequence, read N- to C-terminus: Cysteine--tRNA ligase (495 aa).

Cys29 contributes to the Zn(2+) binding site. Positions 31-41 (VTVYDDSHVGH) match the 'HIGH' region motif. Positions 209, 234, and 238 each coordinate Zn(2+). The 'KMSKS' region signature appears at 266–270 (KMSKS). An ATP-binding site is contributed by Lys269.

Belongs to the class-I aminoacyl-tRNA synthetase family. In terms of assembly, monomer. The cofactor is Zn(2+).

The protein resides in the cytoplasm. The enzyme catalyses tRNA(Cys) + L-cysteine + ATP = L-cysteinyl-tRNA(Cys) + AMP + diphosphate. In Aquifex aeolicus (strain VF5), this protein is Cysteine--tRNA ligase (cysS).